The chain runs to 917 residues: Hexokinase-2 (917 aa).

N-acetylmethionine is present on methionine 1. Positions methionine 1–histidine 16 are mitochondrial-binding peptide (MBP). 2 consecutive Hexokinase domains span residues histidine 16–alanine 458 and alanine 464–alanine 906. ATP contacts are provided by residues arginine 30 and aspartate 84–asparagine 89. The hexokinase small subdomain 1 stretch occupies residues aspartate 73–valine 207. Aspartate 84–threonine 88 contacts D-glucose 6-phosphate. Residues serine 155–phenylalanine 156, threonine 172–lysine 173, asparagine 208–aspartate 209, asparagine 235, glutamate 260, and glutamine 291–glutamate 294 each bind D-glucose. The interval asparagine 208 to aspartate 447 is hexokinase large subdomain 1. Residue aspartate 209 coordinates D-glucose 6-phosphate. Position 413 to 415 (aspartate 413 to serine 415) interacts with D-glucose 6-phosphate. Residue lysine 425–arginine 426 coordinates ATP. D-glucose 6-phosphate-binding positions include serine 449 and aspartate 532–threonine 536. The hexokinase small subdomain 2 stretch occupies residues aspartate 521 to valine 655. Aspartate 532–asparagine 537 lines the ATP pocket. Residues serine 603–phenylalanine 604, threonine 620–lysine 621, and asparagine 656–aspartate 657 contribute to the D-glucose site. The tract at residues asparagine 656 to aspartate 895 is hexokinase large subdomain 2. D-glucose 6-phosphate is bound by residues aspartate 657 and threonine 680. Threonine 680 serves as a coordination point for ATP. Residues serine 682–asparagine 683, glutamate 708, and glutamine 739–glutamate 742 each bind D-glucose. ATP contacts are provided by residues glycine 747–methionine 748, threonine 784–serine 788, and threonine 863–leucine 867. D-glucose 6-phosphate contacts are provided by residues aspartate 861–threonine 863 and serine 897.

This sequence belongs to the hexokinase family. As to quaternary structure, monomer. Interacts with TIGAR; the interaction increases hexokinase activity in a hypoxia- and HIF1A-dependent manner.

The protein localises to the mitochondrion outer membrane. The protein resides in the cytoplasm. It localises to the cytosol. It carries out the reaction a D-hexose + ATP = a D-hexose 6-phosphate + ADP + H(+). The catalysed reaction is D-fructose + ATP = D-fructose 6-phosphate + ADP + H(+). The enzyme catalyses D-glucose + ATP = D-glucose 6-phosphate + ADP + H(+). It participates in carbohydrate metabolism; hexose metabolism. The protein operates within carbohydrate degradation; glycolysis; D-glyceraldehyde 3-phosphate and glycerone phosphate from D-glucose: step 1/4. With respect to regulation, hexokinase activity is specifically inhibited by 2,6-disubstituted glucosamines. In terms of biological role, catalyzes the phosphorylation of hexose, such as D-glucose and D-fructose, to hexose 6-phosphate (D-glucose 6-phosphate and D-fructose 6-phosphate, respectively). Mediates the initial step of glycolysis by catalyzing phosphorylation of D-glucose to D-glucose 6-phosphate. Plays a key role in maintaining the integrity of the outer mitochondrial membrane by preventing the release of apoptogenic molecules from the intermembrane space and subsequent apoptosis. The sequence is that of Hexokinase-2 from Equus zebra (Mountain zebra).